The following is a 101-amino-acid chain: STAS-domain containing protein PA14_20770 (101 aa).

Positions 14-101 (LTIQIQGRFD…SNFEQLFKIS (88 aa)) constitute an STAS domain.

Post-translationally, phosphorylated on a serine residue, possibly on Ser-56.

It localises to the secreted. The sequence is that of STAS-domain containing protein PA14_20770 from Pseudomonas aeruginosa (strain UCBPP-PA14).